We begin with the raw amino-acid sequence, 170 residues long: Ureidoglycolate lyase 1 (170 aa).

This sequence belongs to the ureidoglycolate lyase family. As to quaternary structure, homodimer. It depends on Ni(2+) as a cofactor.

The catalysed reaction is (S)-ureidoglycolate = urea + glyoxylate. The protein operates within nitrogen metabolism; (S)-allantoin degradation. Its function is as follows. Catalyzes the catabolism of the allantoin degradation intermediate (S)-ureidoglycolate, generating urea and glyoxylate. Involved in the utilization of allantoin as nitrogen source. This chain is Ureidoglycolate lyase 1, found in Rhizobium meliloti (strain 1021) (Ensifer meliloti).